The sequence spans 497 residues: MTLFRHLVRITSPRLPFICGSSRRFSAKTAAVERVVSSFRSVTGDEGVSVGSAVREQHGRDESVHRCRPPDVVVFPRSVEEVSALAKICHHYRLPIIPFGTGTGLEGGVGALQGGVCFSLRKMEQVVDLHQEDFDVTVEPGVTRKSLNSYLRDTGLWFPVDPGADASLCGMAATSASGTNAVRYGTMRENVLNLEVVLADGTILHTAGKGRRPRKTAAGYNLTNLFVGSEGTLGIITKATLRLYGVPESMVSAVCSFPSVQSAVDSTVQILQAGVPIARIEFLDDVMINACNRFNNLSYAVTPTLFLEFHGSSKSMEEQVSVTEEITRDNGGSDFAWAEDEETRSRLWKARHDAWYAAMALRPGCKAYSTDVCVPISRLPQIIVETKADLISNNITGPIAGHVGDGNFHCLIVLDPNDTDEVQRVHSFTERLARRALAMDGTCTGEHGIGLGKRALLREEVGPLAIEVMKGLKASLDPRNLMNPGKVLELTQTNTEQ.

Residues 65–246 (HRCRPPDVVV…TKATLRLYGV (182 aa)) enclose the FAD-binding PCMH-type domain.

It belongs to the FAD-binding oxidoreductase/transferase type 4 family. FAD serves as cofactor.

It localises to the mitochondrion. The catalysed reaction is (R)-lactate + 2 Fe(III)-[cytochrome c] = 2 Fe(II)-[cytochrome c] + pyruvate + 2 H(+). Functionally, involved in D-lactate, but not L-lactate catabolic process. The polypeptide is Probable D-lactate dehydrogenase, mitochondrial (ldhd) (Danio rerio (Zebrafish)).